We begin with the raw amino-acid sequence, 195 residues long: Exosome complex component CSL4 (195 aa).

Serine 21 carries the post-translational modification Phosphoserine. One can recognise an S1 motif domain in the interval aspartate 66 to alanine 147.

This sequence belongs to the CSL4 family. In terms of assembly, component of the RNA exosome core complex (Exo-9), composed of EXOSC1, EXOSC2, EXOSC3, EXOSC4, EXOSC5, EXOSC6, EXOSC7, EXOSC8 and EXOSC9; within the complex interacts with EXOSC6. The catalytically inactive RNA exosome core complex (Exo-9) associates with the catalytic subunit EXOSC10/RRP6. Exo-9 may associate with DIS3 to form the nucleolar exosome complex, or DIS3L to form the cytoplasmic exosome complex. Exo-9 is formed by a hexameric base ring consisting of the heterodimers EXOSC4-EXOSC9, EXOSC5-EXOSC8 and EXOSC6-EXOSC7, and a cap ring consisting of EXOSC1, EXOSC2 and EXOSC3. The RNA exosome complex associates with cofactors C1D/RRP47, MPHOSPH6/MPP6 and MTREX/MTR4. Interacts with DDX60.

Its subcellular location is the nucleus. It localises to the nucleolus. The protein localises to the cytoplasm. Its function is as follows. Non-catalytic component of the RNA exosome complex which has 3'-&gt;5' exoribonuclease activity and participates in a multitude of cellular RNA processing and degradation events. In the nucleus, the RNA exosome complex is involved in proper maturation of stable RNA species such as rRNA, snRNA and snoRNA, in the elimination of RNA processing by-products and non-coding 'pervasive' transcripts, such as antisense RNA species and promoter-upstream transcripts (PROMPTs), and of mRNAs with processing defects, thereby limiting or excluding their export to the cytoplasm. The RNA exosome may be involved in Ig class switch recombination (CSR) and/or Ig variable region somatic hypermutation (SHM) by targeting AICDA deamination activity to transcribed dsDNA substrates. In the cytoplasm, the RNA exosome complex is involved in general mRNA turnover and specifically degrades inherently unstable mRNAs containing AU-rich elements (AREs) within their 3' untranslated regions, and in RNA surveillance pathways, preventing translation of aberrant mRNAs. It seems to be involved in degradation of histone mRNA. The catalytic inactive RNA exosome core complex of 9 subunits (Exo-9) is proposed to play a pivotal role in the binding and presentation of RNA for ribonucleolysis, and to serve as a scaffold for the association with catalytic subunits and accessory proteins or complexes. EXOSC1 as peripheral part of the Exo-9 complex stabilizes the hexameric ring of RNase PH-domain subunits through contacts with EXOSC6 and EXOSC8. This is Exosome complex component CSL4 (Exosc1) from Mus musculus (Mouse).